Consider the following 310-residue polypeptide: HPr kinase/phosphorylase 1 (310 aa).

Active-site residues include His-139 and Lys-160. ATP is bound at residue 154 to 161; that stretch reads GQSGVGKS. Mg(2+) is bound at residue Ser-161. The active-site Proton acceptor; for phosphorylation activity. Proton donor; for dephosphorylation activity is the Asp-178. The interval 202–211 is important for the catalytic mechanism of both phosphorylation and dephosphorylation; that stretch reads LEIRGLGIIN. Glu-203 contacts Mg(2+). Arg-244 is an active-site residue. Residues 265–270 are important for the catalytic mechanism of dephosphorylation; it reads PVRPGR.

It belongs to the HPrK/P family. As to quaternary structure, homohexamer. Mg(2+) serves as cofactor.

The catalysed reaction is [HPr protein]-L-serine + ATP = [HPr protein]-O-phospho-L-serine + ADP + H(+). The enzyme catalyses [HPr protein]-O-phospho-L-serine + phosphate + H(+) = [HPr protein]-L-serine + diphosphate. Its function is as follows. Catalyzes the ATP- as well as the pyrophosphate-dependent phosphorylation of a specific serine residue in HPr, a phosphocarrier protein of the phosphoenolpyruvate-dependent sugar phosphotransferase system (PTS). HprK/P also catalyzes the pyrophosphate-producing, inorganic phosphate-dependent dephosphorylation (phosphorolysis) of seryl-phosphorylated HPr (P-Ser-HPr). The two antagonistic activities of HprK/P are regulated by several intracellular metabolites, which change their concentration in response to the absence or presence of rapidly metabolisable carbon sources (glucose, fructose, etc.) in the growth medium. Also phosphorylates/dephosphorylates the HPr-like catabolite repression protein crh on a specific serine residue. Therefore, by controlling the phosphorylation state of HPr and crh, HPrK/P is a sensor enzyme that plays a major role in the regulation of carbon metabolism and sugar transport: it mediates carbon catabolite repression (CCR), and regulates PTS-catalyzed carbohydrate uptake and inducer exclusion. This Oceanobacillus iheyensis (strain DSM 14371 / CIP 107618 / JCM 11309 / KCTC 3954 / HTE831) protein is HPr kinase/phosphorylase 1 (hprK1).